A 110-amino-acid chain; its full sequence is Large ribosomal subunit protein uL22 (110 aa).

This sequence belongs to the universal ribosomal protein uL22 family. Part of the 50S ribosomal subunit.

Its function is as follows. This protein binds specifically to 23S rRNA; its binding is stimulated by other ribosomal proteins, e.g. L4, L17, and L20. It is important during the early stages of 50S assembly. It makes multiple contacts with different domains of the 23S rRNA in the assembled 50S subunit and ribosome. In terms of biological role, the globular domain of the protein is located near the polypeptide exit tunnel on the outside of the subunit, while an extended beta-hairpin is found that lines the wall of the exit tunnel in the center of the 70S ribosome. The protein is Large ribosomal subunit protein uL22 of Vibrio campbellii (strain ATCC BAA-1116).